A 205-amino-acid polypeptide reads, in one-letter code: Beta-crystallin B2 (205 aa).

At A2 the chain carries N-acetylalanine. The N-terminal arm stretch occupies residues 2 to 16; sequence ASDHQTQAGKPQPLN. 2 consecutive Beta/gamma crystallin 'Greek key' domains span residues 17–56 and 57–101; these read PKII…LVQA and GPWV…RPIK. The segment at 102-106 is connecting peptide; the sequence is VDSQE. Beta/gamma crystallin 'Greek key' domains are found at residues 107–148 and 149–191; these read HKII…RVQS and GTWV…RRIR. Positions 193 to 205 are C-terminal arm; it reads MQWHQRGAFHPSS.

Belongs to the beta/gamma-crystallin family. As to quaternary structure, homo/heterodimer, or complexes of higher-order. The structure of beta-crystallin oligomers seems to be stabilized through interactions between the N-terminal arms.

Crystallins are the dominant structural components of the vertebrate eye lens. In Mesocricetus auratus (Golden hamster), this protein is Beta-crystallin B2 (CRYBB2).